The following is an 855-amino-acid chain: Vomeronasal type-2 receptor 26 (855 aa).

A signal peptide spans 1–22; the sequence is MKLLTAFSPLVVLILFQEQISC. The Extracellular segment spans residues 23-595; the sequence is YYLTKYASSG…FLAHEDPLGT (573 aa). Residues N101 and N295 are each glycosylated (N-linked (GlcNAc...) asparagine). The chain crosses the membrane as a helical span at residues 596–616; the sequence is VLVSLAISLSAFSAMILGLFI. Topologically, residues 617-630 are cytoplasmic; sequence CYRETPIVRANNRN. A helical membrane pass occupies residues 631-651; that stretch reads LSYLLLISLKLCFSCSLMFIG. Topologically, residues 652–662 are extracellular; the sequence is QPRTVTCVLRQ. Residues 663–683 form a helical membrane-spanning segment; it reads IIFGIVFSIVISAILAKTFIV. The Cytoplasmic segment spans residues 684-706; it reads VMAFKAIKPGSILKMGMVTRLSN. A helical membrane pass occupies residues 707 to 727; it reads AIVCCGSIIQVCICAVWLGTY. At 728–753 the chain is on the extracellular side; sequence PPFPDVDMHSEFGQIILWCNEGSTLA. The chain crosses the membrane as a helical span at residues 754–774; sequence FYCVLGYLGFLASLSLLIAFL. Topologically, residues 775 to 786 are cytoplasmic; that stretch reads ARRLPDSFNEAK. The chain crosses the membrane as a helical span at residues 787 to 807; sequence TITFSMLVFCSVWISFVPAYL. At 808 to 814 the chain is on the extracellular side; that stretch reads SSKGKTM. Residues 815–835 traverse the membrane as a helical segment; sequence VAVEILSILASSAGLLGCIFL. Residues 836 to 855 lie on the Cytoplasmic side of the membrane; the sequence is PKCYVILLKSGGHSRKKFFK.

It belongs to the G-protein coupled receptor 3 family. In terms of tissue distribution, expressed in the basal epithelium of the vomeronasal organ. Located to vomeronasal sensory neurons that project their axons to six to ten glomeruli that reside in globally conserved areas within the caudal accessory olfactory bulb (AOB).

The protein localises to the cell membrane. In terms of biological role, putative pheromone receptor. The sequence is that of Vomeronasal type-2 receptor 26 (Vmn2r26) from Mus musculus (Mouse).